We begin with the raw amino-acid sequence, 162 residues long: COP9 signalosome complex subunit 9 (162 aa).

A PCI domain is found at glutamate 6–arginine 118.

In terms of assembly, component of a COP9 signalosome-like (CSN) complex, composed of at least RRI1/CSN5, CSN9, RRI2/CSN10, PCI8/CSN11, CSN12 and CSI1. In the complex, it probably interacts directly with CSN12 and CSI1. Also interacts with RPN5.

The protein localises to the cytoplasm. The protein resides in the nucleus. Component of the COP9 signalosome (CSN) complex that acts as a regulator of the ubiquitin (Ubl) conjugation pathway by mediating the deneddylation of the cullin subunit of SCF-type E3 ubiquitin-protein ligase complexes. The CSN complex is involved in the regulation of the mating pheromone response. The protein is COP9 signalosome complex subunit 9 (CSN9) of Saccharomyces cerevisiae (strain ATCC 204508 / S288c) (Baker's yeast).